Reading from the N-terminus, the 284-residue chain is GPN-loop GTPase 3 (284 aa).

Residue 13-18 (GSGKST) participates in GTP binding. The short motif at 72–74 (GPN) is the Gly-Pro-Asn (GPN)-loop; involved in dimer interface element. 174-177 (TKMD) contributes to the GTP binding site.

Belongs to the GPN-loop GTPase family. As to quaternary structure, heterodimer with GPN1. Binds to RNA polymerase II (RNAPII). Interacts directly with subunits RPB4 and RPB7 and the CTD of RPB1.

In terms of biological role, small GTPase required for proper localization of RNA polymerase II (RNAPII). May act at an RNAP assembly step prior to nuclear import. This chain is GPN-loop GTPase 3, found in Homo sapiens (Human).